Consider the following 222-residue polypeptide: Eukaryotic translation initiation factor 3 subunit K (222 aa).

A PCI domain is found at 46 to 208 (YDLEANLAVL…KIKTKNITEK (163 aa)).

It belongs to the eIF-3 subunit K family. In terms of assembly, component of the eukaryotic translation initiation factor 3 (eIF-3) complex. The eIF-3 complex interacts with pix.

Its subcellular location is the cytoplasm. Functionally, component of the eukaryotic translation initiation factor 3 (eIF-3) complex, which is involved in protein synthesis of a specialized repertoire of mRNAs and, together with other initiation factors, stimulates binding of mRNA and methionyl-tRNAi to the 40S ribosome. The eIF-3 complex specifically targets and initiates translation of a subset of mRNAs involved in cell proliferation. In Drosophila persimilis (Fruit fly), this protein is Eukaryotic translation initiation factor 3 subunit K.